The sequence spans 955 residues: Protein translocase subunit SecA (955 aa).

ATP is bound by residues Q87, 105–109 (GEGKT), and D494. Residues 861–955 (ASPAPAAPRP…KKAPRTKRKR (95 aa)) form a disordered region. A compositionally biased stretch (low complexity) spans 874-888 (QEAAQQAQGTAAPSA). Positions 943–955 (SKGKKAPRTKRKR) are enriched in basic residues.

Belongs to the SecA family. As to quaternary structure, monomer and homodimer. Part of the essential Sec protein translocation apparatus which comprises SecA, SecYEG and auxiliary proteins SecDF. Other proteins may also be involved.

It localises to the cell membrane. Its subcellular location is the cytoplasm. The catalysed reaction is ATP + H2O + cellular proteinSide 1 = ADP + phosphate + cellular proteinSide 2.. Its function is as follows. Part of the Sec protein translocase complex. Interacts with the SecYEG preprotein conducting channel. Has a central role in coupling the hydrolysis of ATP to the transfer of proteins into and across the cell membrane, serving as an ATP-driven molecular motor driving the stepwise translocation of polypeptide chains across the membrane. The polypeptide is Protein translocase subunit SecA (Rhodococcus jostii (strain RHA1)).